Here is a 385-residue protein sequence, read N- to C-terminus: Probable tRNA sulfurtransferase (385 aa).

The 104-residue stretch at 57-160 (DGVIERVKKV…RGNAYVFTDK (104 aa)) folds into the THUMP domain. ATP is bound by residues 180 to 181 (ML), 205 to 206 (YY), R262, G284, and Q293.

It belongs to the ThiI family.

The protein resides in the cytoplasm. The catalysed reaction is [ThiI sulfur-carrier protein]-S-sulfanyl-L-cysteine + a uridine in tRNA + 2 reduced [2Fe-2S]-[ferredoxin] + ATP + H(+) = [ThiI sulfur-carrier protein]-L-cysteine + a 4-thiouridine in tRNA + 2 oxidized [2Fe-2S]-[ferredoxin] + AMP + diphosphate. The enzyme catalyses [ThiS sulfur-carrier protein]-C-terminal Gly-Gly-AMP + S-sulfanyl-L-cysteinyl-[cysteine desulfurase] + AH2 = [ThiS sulfur-carrier protein]-C-terminal-Gly-aminoethanethioate + L-cysteinyl-[cysteine desulfurase] + A + AMP + 2 H(+). It functions in the pathway cofactor biosynthesis; thiamine diphosphate biosynthesis. Its function is as follows. Catalyzes the ATP-dependent transfer of a sulfur to tRNA to produce 4-thiouridine in position 8 of tRNAs, which functions as a near-UV photosensor. Also catalyzes the transfer of sulfur to the sulfur carrier protein ThiS, forming ThiS-thiocarboxylate. This is a step in the synthesis of thiazole, in the thiamine biosynthesis pathway. The sulfur is donated as persulfide by IscS. This chain is Probable tRNA sulfurtransferase, found in Clostridium perfringens (strain SM101 / Type A).